Here is a 20-residue protein sequence, read N- to C-terminus: Basic phospholipase A2 cannitoxin alpha chain (20 aa).

In terms of assembly, heterotrimer of alpha, beta, and gamma chains; non-covalently linked. Ca(2+) serves as cofactor. As to expression, expressed by the venom gland.

Its subcellular location is the secreted. The enzyme catalyses a 1,2-diacyl-sn-glycero-3-phosphocholine + H2O = a 1-acyl-sn-glycero-3-phosphocholine + a fatty acid + H(+). Functionally, heterotrimer: Snake venom phospholipase A2 (PLA2) heterotrimer that acts as a potent presynaptic neurotoxin by blocking synaptic transmission and synaptic vesicle recycling. Enzymatic activity is essential for the neurotoxic effects. May act by binding in a calcium-dependent fashion to neurotonal pentraxin-1 (NPTX1) and neurotonal pentraxin-2 (NPTX2), but not to neuronal pentraxin receptor (NPTXR). Also binds to taipoxin-associated calcium binding protein 49 (RCN2), a protein localized in the lumen of endoplasmic reticulum. Its function is as follows. Monomer (alpha chain): Snake venom phospholipase A2 (PLA2) that possesses a low level of presynaptic activity and the same high enzymatic activity than the heterotrimer. PLA2 catalyzes the calcium-dependent hydrolysis of the 2-acyl groups in 3-sn-phosphoglycerides. This is Basic phospholipase A2 cannitoxin alpha chain from Oxyuranus scutellatus canni (Papuan taipan).